We begin with the raw amino-acid sequence, 238 residues long: Probable transcriptional regulatory protein YeeN (238 aa).

It belongs to the TACO1 family. YeeN subfamily.

Its subcellular location is the cytoplasm. This is Probable transcriptional regulatory protein YeeN from Salmonella typhimurium (strain LT2 / SGSC1412 / ATCC 700720).